The following is a 205-amino-acid chain: Guanylate kinase (205 aa).

The region spanning 6-184 is the Guanylate kinase-like domain; sequence GLLLVVSGPS…SAKEIEGIIS (179 aa). Residue 13 to 20 coordinates ATP; sequence GPSGAGKG.

This sequence belongs to the guanylate kinase family.

The protein localises to the cytoplasm. It catalyses the reaction GMP + ATP = GDP + ADP. Essential for recycling GMP and indirectly, cGMP. The sequence is that of Guanylate kinase from Clostridioides difficile (strain 630) (Peptoclostridium difficile).